The sequence spans 230 residues: Cytidylate kinase (230 aa).

12–20 (GPSGAGKGT) provides a ligand contact to ATP.

This sequence belongs to the cytidylate kinase family. Type 1 subfamily.

The protein localises to the cytoplasm. It catalyses the reaction CMP + ATP = CDP + ADP. The enzyme catalyses dCMP + ATP = dCDP + ADP. This Shewanella loihica (strain ATCC BAA-1088 / PV-4) protein is Cytidylate kinase.